Consider the following 343-residue polypeptide: Type II restriction enzyme BsuMI component YdiS (343 aa).

BsuMI restriction activity requires YdiR, YdiS and YdjA.

It carries out the reaction Endonucleolytic cleavage of DNA to give specific double-stranded fragments with terminal 5'-phosphates.. Functionally, a P subtype restriction enzyme that recognizes the double-stranded sequence 5'-CTCGAG-3'; the cleavage site is unknown. The polypeptide is Type II restriction enzyme BsuMI component YdiS (ydiS) (Bacillus subtilis (strain 168)).